The chain runs to 573 residues: Methionine--tRNA ligase (573 aa).

Positions proline 11–asparagine 21 match the 'HIGH' region motif. Positions 143, 146, 156, and 159 each coordinate Zn(2+). The short motif at glutamine 346 to serine 350 is the 'KMSKS' region element. Threonine 349 contributes to the ATP binding site.

This sequence belongs to the class-I aminoacyl-tRNA synthetase family. MetG type 1 subfamily. Monomer. It depends on Zn(2+) as a cofactor.

It is found in the cytoplasm. The enzyme catalyses tRNA(Met) + L-methionine + ATP = L-methionyl-tRNA(Met) + AMP + diphosphate. In terms of biological role, is required not only for elongation of protein synthesis but also for the initiation of all mRNA translation through initiator tRNA(fMet) aminoacylation. The chain is Methionine--tRNA ligase from Ruegeria sp. (strain TM1040) (Silicibacter sp.).